Consider the following 218-residue polypeptide: Small ribosomal subunit protein uS3 (218 aa).

The 69-residue stretch at 38–106 (IRKYIESKLA…RVHINIVEIK (69 aa)) folds into the KH type-2 domain.

It belongs to the universal ribosomal protein uS3 family. As to quaternary structure, part of the 30S ribosomal subunit. Forms a tight complex with proteins S10 and S14.

In terms of biological role, binds the lower part of the 30S subunit head. Binds mRNA in the 70S ribosome, positioning it for translation. The polypeptide is Small ribosomal subunit protein uS3 (Ligilactobacillus salivarius (strain UCC118) (Lactobacillus salivarius)).